The primary structure comprises 633 residues: ATP-dependent clpX-like chaperone, mitochondrial (633 aa).

The N-terminal 56 residues, 1-56 (MPSCGACTCGAAAVRLITSSLASAQRGISGGRIHMSVLGRLGTFETQILQRAPLRS), are a transit peptide targeting the mitochondrion. A disordered region spans residues 68 to 100 (DGISKDGSGDGNKKSASEGSSKKSGSGNSGKGG). Residues 69-83 (GISKDGSGDGNKKSA) are compositionally biased toward basic and acidic residues. The span at 84–93 (SEGSSKKSGS) shows a compositional bias: low complexity. A ClpX-type ZB domain is found at 93–146 (SGNSGKGGNQLRCPKCGDLCTHVETFVSSTRFVKCEKCHHFFVVLSEADSKKSI). Positions 105, 108, 127, and 130 each coordinate Zn(2+). ATP is bound at residue 294–301 (PTGSGKTL). N6-acetyllysine is present on Lys437. Positions 598-610 (KEPGYIRAPTKES) are enriched in basic and acidic residues. Residues 598–633 (KEPGYIRAPTKESSEEEYDSGVEEEGWPRQADAANS) form a disordered region. Over residues 611–622 (SEEEYDSGVEEE) the composition is skewed to acidic residues. The residue at position 617 (Ser617) is a Phosphoserine.

The protein belongs to the ClpX chaperone family. As to quaternary structure, homohexamer that forms a ring structure; this hexamerization requires ATP binding. Component of the ClpXP complex formed by the assembly of two CLPP heptameric rings with two CLPX hexameric rings, giving rise to a symmetrical structure with two central CLPP rings flanked by a CLPX ring at either end of the complex. Interacts with TFAM. Higher expression in skeletal muscle and heart and to a lesser extent in liver, brain, placenta, lung, kidney and pancreas.

It is found in the mitochondrion. The protein localises to the mitochondrion matrix. Its subcellular location is the mitochondrion nucleoid. The enzyme catalyses ATP + H2O = ADP + phosphate + H(+). In terms of biological role, ATP-dependent chaperone that functions as an unfoldase. As part of the ClpXP protease complex, it recognizes specific protein substrates, unfolds them using energy derived from ATP hydrolysis, and then translocates them to the proteolytic subunit (CLPP) of the ClpXP complex for degradation. Thanks to its chaperone activity, it also functions in the incorporation of the pyridoxal phosphate cofactor into 5-aminolevulinate synthase, thereby activating 5-aminolevulinate (ALA) synthesis, the first step in heme biosynthesis. This chaperone is also involved in the control of mtDNA nucleoid distribution, by regulating mitochondrial transcription factor A (TFAM) activity. This is ATP-dependent clpX-like chaperone, mitochondrial from Homo sapiens (Human).